Reading from the N-terminus, the 832-residue chain is Beta-galactosidase (832 aa).

Residues 1–25 form the signal peptide; it reads MALKLVLMLMVALLAAVWSPPAVTA. Catalysis depends on glutamate 183, which acts as the Proton donor. Glutamate 252 functions as the Nucleophile in the catalytic mechanism. Residues 741-832 enclose the SUEL-type lectin domain; the sequence is AYGRPKVHLS…KKLAVEAICE (92 aa).

It belongs to the glycosyl hydrolase 35 family.

The protein localises to the secreted. The protein resides in the extracellular space. It is found in the apoplast. The enzyme catalyses Hydrolysis of terminal non-reducing beta-D-galactose residues in beta-D-galactosides.. This Asparagus officinalis (Garden asparagus) protein is Beta-galactosidase.